A 163-amino-acid polypeptide reads, in one-letter code: Nucleotide-binding protein ECA1137 (163 aa).

It belongs to the YajQ family.

Functionally, nucleotide-binding protein. The sequence is that of Nucleotide-binding protein ECA1137 from Pectobacterium atrosepticum (strain SCRI 1043 / ATCC BAA-672) (Erwinia carotovora subsp. atroseptica).